Consider the following 109-residue polypeptide: Nascent polypeptide-associated complex protein (109 aa).

One can recognise an NAC-A/B domain in the interval 3–69; the sequence is PMNPKQLKKL…TEEERVVLKI (67 aa).

This sequence belongs to the NAC-alpha family. In terms of assembly, homodimer. Interacts with the ribosome. Binds ribosomal RNA.

Functionally, contacts the emerging nascent chain on the ribosome. The sequence is that of Nascent polypeptide-associated complex protein from Pyrococcus abyssi (strain GE5 / Orsay).